The chain runs to 479 residues: UPF0164 protein TP_0865 (479 aa).

The first 49 residues, 1-49, serve as a signal peptide directing secretion; that stretch reads MVRMRRRRACSSGGACGCAAVRGARSFLSVRVLGMRIGMSALCLAPLFA.

The protein belongs to the UPF0164 family.

The sequence is that of UPF0164 protein TP_0865 from Treponema pallidum (strain Nichols).